The primary structure comprises 96 residues: Secreted RxLR effector protein 123 (96 aa).

The signal sequence occupies residues methionine 1–glycine 22. The short motif at arginine 49–arginine 70 is the RxLR-dEER element. The disordered stretch occupies residues proline 57–glutamate 96. Polar residues predominate over residues proline 87–glutamate 96.

This sequence belongs to the RxLR effector family.

The protein resides in the secreted. The protein localises to the host nucleus. It localises to the host cytoplasm. Functionally, secreted effector that dos not suppress the host cell death induced by cell death-inducing proteins. This Plasmopara viticola (Downy mildew of grapevine) protein is Secreted RxLR effector protein 123.